Consider the following 382-residue polypeptide: Fetuin-B (382 aa).

An N-terminal signal peptide occupies residues 1–15; that stretch reads MGLLLPLALCILVLC. Cystatin fetuin-B-type domains are found at residues 25-138 and 149-255; these read ALNP…YNCT and MTCP…VTCD. An N-linked (GlcNAc...) asparagine glycan is attached at asparagine 37. Intrachain disulfides connect cysteine 93–cysteine 104, cysteine 117–cysteine 137, and cysteine 151–cysteine 154. Asparagine 136 carries N-linked (GlcNAc...) asparagine glycosylation. Asparagine 182 carries an N-linked (GlcNAc...) asparagine glycan. 2 disulfides stabilise this stretch: cysteine 216/cysteine 224 and cysteine 237/cysteine 254. Polar residues-rich tracts occupy residues 262-276 and 286-295; these read PATGSENSAVNQKPT and QKNTPPTDSP. Disordered regions lie at residues 262-320 and 363-382; these read PATG…EKGP and ARTAECPGPAQNASPLVLPP. Residues threonine 289 and threonine 292 are each glycosylated (O-linked (GalNAc...) threonine). Over residues 310-320 the composition is skewed to basic and acidic residues; it reads LDDKNSQEKGP. A Phosphoserine modification is found at serine 315.

This sequence belongs to the fetuin family. As to expression, liver and testis.

The protein resides in the secreted. In terms of biological role, protease inhibitor required for egg fertilization. Required to prevent premature zona pellucida hardening before fertilization, probably by inhibiting the protease activity of ASTL, a protease that mediates the cleavage of ZP2 and triggers zona pellucida hardening. The sequence is that of Fetuin-B (FETUB) from Homo sapiens (Human).